The chain runs to 348 residues: Probable dual-specificity RNA methyltransferase RlmN (348 aa).

Residue Glu-90 is the Proton acceptor of the active site. One can recognise a Radical SAM core domain in the interval 96-324 (AAERLTVCVS…ASVRHTRGLE (229 aa)). The cysteines at positions 103 and 329 are disulfide-linked. [4Fe-4S] cluster is bound by residues Cys-110, Cys-114, and Cys-117. Residues 157-158 (GE), Ser-187, 210-212 (SLH), and Asn-286 each bind S-adenosyl-L-methionine. Cys-329 serves as the catalytic S-methylcysteine intermediate.

This sequence belongs to the radical SAM superfamily. RlmN family. [4Fe-4S] cluster is required as a cofactor.

The protein resides in the cytoplasm. It catalyses the reaction adenosine(2503) in 23S rRNA + 2 reduced [2Fe-2S]-[ferredoxin] + 2 S-adenosyl-L-methionine = 2-methyladenosine(2503) in 23S rRNA + 5'-deoxyadenosine + L-methionine + 2 oxidized [2Fe-2S]-[ferredoxin] + S-adenosyl-L-homocysteine. The enzyme catalyses adenosine(37) in tRNA + 2 reduced [2Fe-2S]-[ferredoxin] + 2 S-adenosyl-L-methionine = 2-methyladenosine(37) in tRNA + 5'-deoxyadenosine + L-methionine + 2 oxidized [2Fe-2S]-[ferredoxin] + S-adenosyl-L-homocysteine. Its function is as follows. Specifically methylates position 2 of adenine 2503 in 23S rRNA and position 2 of adenine 37 in tRNAs. The polypeptide is Probable dual-specificity RNA methyltransferase RlmN (Gloeobacter violaceus (strain ATCC 29082 / PCC 7421)).